The primary structure comprises 479 residues: Solute carrier family 7 member 13 (479 aa).

Topologically, residues 1-14 (MAMDIEKKIYLKRQ) are cytoplasmic. The chain crosses the membrane as a helical span at residues 15 to 35 (LGYFWGTNFLIINIIGAGIFV). Residues 36-47 (SPKGVLQYSSMN) are Extracellular-facing. The chain crosses the membrane as a helical span at residues 48–68 (VGVSLCVWVFCAVLSMTSTLC). Residues 69–89 (AAEIGITFPYTVAHYYFLKRC) lie on the Cytoplasmic side of the membrane. A helical membrane pass occupies residues 90–110 (FGPFVAFLRLWTSLFTGPGVL). The Extracellular segment spans residues 111–129 (ASQALLLAEYGIQPFYPSC). The chain crosses the membrane as a helical span at residues 130–150 (SAPAVPKKCLALAMLWIVGIL). Topologically, residues 151–165 (NSRGVKELSWLQTVS) are cytoplasmic. Residues 166 to 186 (MVLKMGILSFISLSGLFLLVT) traverse the membrane as a helical segment. Over 187–208 (GRKENVRRLQNAFDAEFPEVSR) the chain is Extracellular. A helical membrane pass occupies residues 209–229 (LIEAIFQGYFAFSGGGSFTYV). At 230 to 242 (AGELKEPSKTIPR) the chain is on the cytoplasmic side. A helical membrane pass occupies residues 243 to 263 (CIFTALPLVTVVYLLANLSYL). Over 264 to 289 (TVLSPQELLSSDAVALTWTDRVIPQL) the chain is Extracellular. The chain crosses the membrane as a helical span at residues 290–310 (TWSVPFAISASLFSNLVTSVF). The Cytoplasmic portion of the chain corresponds to 311 to 338 (ETSRTSYIASRNGQLPLLCSTLNVHSSP). The helical transmembrane segment at 339–359 (FIAVLLDVSMGSIAIVLTNLI) threads the bilayer. Position 360 (Glu360) is a topological domain, extracellular. A helical membrane pass occupies residues 361-381 (LINYLFFVFSIWTVLSVIGIL). The Cytoplasmic segment spans residues 382 to 396 (KLRYQEPNLHRPYKV). Residues 397-417 (FSPFLFITAAISLSMVLIPLI) form a helical membrane-spanning segment. At 418–423 (KSPKMQ) the chain is on the extracellular side. Residues 424 to 444 (YIYVFLFFLGGLLFYVPLIHF) traverse the membrane as a helical segment. At 445–479 (KLKLIWFQKLTCYLQLLFNICIPDVSDEHVAEEES) the chain is on the cytoplasmic side.

The protein belongs to the amino acid-polyamine-organocation (APC) superfamily. Disulfide-linked heterodimer composed of the catalytic light subunit SLC7A13 and the heavy subunit SLC3A1.

It is found in the apical cell membrane. The catalysed reaction is L-cystine(out) + L-aspartate(in) = L-cystine(in) + L-aspartate(out). The enzyme catalyses L-cystine(out) = L-cystine(in). It carries out the reaction L-aspartate(in) + L-glutamate(out) = L-aspartate(out) + L-glutamate(in). It catalyses the reaction L-aspartate(in) + L-glutamine(out) = L-aspartate(out) + L-glutamine(in). The catalysed reaction is L-aspartate(in) + L-methionine(out) = L-aspartate(out) + L-methionine(in). The enzyme catalyses L-leucine(out) + L-aspartate(in) = L-leucine(in) + L-aspartate(out). It carries out the reaction L-valine(out) + L-aspartate(in) = L-valine(in) + L-aspartate(out). It catalyses the reaction L-aspartate(in) + L-phenylalanine(out) = L-aspartate(out) + L-phenylalanine(in). The catalysed reaction is L-tyrosine(out) + L-aspartate(in) = L-tyrosine(in) + L-aspartate(out). The enzyme catalyses L-tryptophan(out) + L-aspartate(in) = L-tryptophan(in) + L-aspartate(out). Functionally, associates with SLC3A1/rBAT to form a functional heterodimeric complex that transports anionic and neutral amino acids across the apical plasma membrane of renal epithelium. Preferentially mediates exchange transport, but can also operate via facilitated diffusion. May act as a major transporter for L-cystine in late proximal tubules, ensuring its reabsorption from the luminal fluid in exchange for cytosolic L-glutamate or L-aspartate. The sequence is that of Solute carrier family 7 member 13 (Slc7a13) from Rattus norvegicus (Rat).